The primary structure comprises 240 residues: Ubiquinone biosynthesis O-methyltransferase (240 aa).

Residues Arg44, Gly64, Asp85, and Met129 each coordinate S-adenosyl-L-methionine.

This sequence belongs to the methyltransferase superfamily. UbiG/COQ3 family.

The enzyme catalyses a 3-demethylubiquinol + S-adenosyl-L-methionine = a ubiquinol + S-adenosyl-L-homocysteine + H(+). It catalyses the reaction a 3-(all-trans-polyprenyl)benzene-1,2-diol + S-adenosyl-L-methionine = a 2-methoxy-6-(all-trans-polyprenyl)phenol + S-adenosyl-L-homocysteine + H(+). The protein operates within cofactor biosynthesis; ubiquinone biosynthesis. O-methyltransferase that catalyzes the 2 O-methylation steps in the ubiquinone biosynthetic pathway. The protein is Ubiquinone biosynthesis O-methyltransferase of Photorhabdus laumondii subsp. laumondii (strain DSM 15139 / CIP 105565 / TT01) (Photorhabdus luminescens subsp. laumondii).